A 184-amino-acid polypeptide reads, in one-letter code: Ribosome-recycling factor (184 aa).

This sequence belongs to the RRF family.

The protein localises to the cytoplasm. Functionally, responsible for the release of ribosomes from messenger RNA at the termination of protein biosynthesis. May increase the efficiency of translation by recycling ribosomes from one round of translation to another. This chain is Ribosome-recycling factor, found in Aquifex aeolicus (strain VF5).